Here is a 69-residue protein sequence, read N- to C-terminus: Bacteriocin microcin B17 (69 aa).

Residues 1 to 26 (MELKASEFGVVLSVDALKLSRQSPLG) constitute a propeptide that is removed on maturation. The segment at residues 39–40 (GS) is a cross-link (oxazole-4-carboxylic acid (Gly-Ser)). The segment at residues 40–41 (SC) is a cross-link (thiazole-4-carboxylic acid (Ser-Cys)). Cross-links (thiazole-4-carboxylic acid (Gly-Cys)) lie at residues 47–48 (GC), 50–51 (GC), and 54–55 (GC). Positions 55–56 (CS) form a cross-link, oxazole-4-carboxylic acid (Cys-Ser). 2 consecutive cross-links (oxazole-4-carboxylic acid (Gly-Ser)) follow at residues 61-62 (GS) and 64-65 (GS).

The processed N-terminus does not resemble a typical secretion signal sequence. In terms of processing, maturation of thiazole and oxazole containing antibiotics involves the enzymatic condensation of a Cys, Ser or Thr with the alpha-carbonyl of the preceding amino acid to form a thioether or ether bond, then dehydration to form a double bond with the alpha-amino nitrogen. Thiazoline or oxazoline rings are dehydrogenated to form thiazole or oxazole rings.

Its function is as follows. This glycine-rich peptide antibiotic inhibits DNA replication in many enteric bacteria, that leads to induction of the SOS repair system, massive DNA degradation and cell death. B17 inhibits type II topoisomerase by trapping an enzyme - DNA cleavable complex. This Escherichia coli protein is Bacteriocin microcin B17 (mcbA).